We begin with the raw amino-acid sequence, 245 residues long: 4-hydroxy-tetrahydrodipicolinate reductase (245 aa).

Residues 7–12 (GAKGKV), 75–77 (GTT), and 102–105 (APNF) contribute to the NAD(+) site. Catalysis depends on His132, which acts as the Proton donor/acceptor. His133 contributes to the (S)-2,3,4,5-tetrahydrodipicolinate binding site. Lys136 (proton donor) is an active-site residue. Residue 142–143 (GT) participates in (S)-2,3,4,5-tetrahydrodipicolinate binding.

It belongs to the DapB family.

It is found in the cytoplasm. The enzyme catalyses (S)-2,3,4,5-tetrahydrodipicolinate + NAD(+) + H2O = (2S,4S)-4-hydroxy-2,3,4,5-tetrahydrodipicolinate + NADH + H(+). It carries out the reaction (S)-2,3,4,5-tetrahydrodipicolinate + NADP(+) + H2O = (2S,4S)-4-hydroxy-2,3,4,5-tetrahydrodipicolinate + NADPH + H(+). It participates in amino-acid biosynthesis; L-lysine biosynthesis via DAP pathway; (S)-tetrahydrodipicolinate from L-aspartate: step 4/4. In terms of biological role, catalyzes the conversion of 4-hydroxy-tetrahydrodipicolinate (HTPA) to tetrahydrodipicolinate. The sequence is that of 4-hydroxy-tetrahydrodipicolinate reductase from Mycobacterium bovis (strain ATCC BAA-935 / AF2122/97).